A 174-amino-acid chain; its full sequence is Small ribosomal subunit protein uS12m (174 aa).

The protein belongs to the universal ribosomal protein uS12 family. In terms of assembly, component of the mitochondrial small ribosomal subunit (mt-SSU). Mature N.crassa 74S mitochondrial ribosomes consist of a small (37S) and a large (54S) subunit. The 37S small subunit contains a 16S ribosomal RNA (16S mt-rRNA) and 32 different proteins. The 54S large subunit contains a 23S rRNA (23S mt-rRNA) and 42 different proteins. uS12m forms part of the decoding center of the mt-SSU.

It localises to the mitochondrion. Component of the mitochondrial ribosome (mitoribosome), a dedicated translation machinery responsible for the synthesis of mitochondrial genome-encoded proteins, including at least some of the essential transmembrane subunits of the mitochondrial respiratory chain. The mitoribosomes are attached to the mitochondrial inner membrane and translation products are cotranslationally integrated into the membrane. The protein is Small ribosomal subunit protein uS12m (mrps12) of Neurospora crassa (strain ATCC 24698 / 74-OR23-1A / CBS 708.71 / DSM 1257 / FGSC 987).